Here is a 225-residue protein sequence, read N- to C-terminus: RNA chaperone ProQ (225 aa).

The tract at residues lysine 107–arginine 169 is disordered. The segment covering arginine 109–glutamine 118 has biased composition (low complexity). The segment covering arginine 137–proline 146 has biased composition (basic residues). Basic and acidic residues predominate over residues arginine 147–lysine 156.

This sequence belongs to the ProQ family.

The protein resides in the cytoplasm. Its function is as follows. RNA chaperone with significant RNA binding, RNA strand exchange and RNA duplexing activities. May regulate ProP activity through an RNA-based, post-transcriptional mechanism. The chain is RNA chaperone ProQ from Klebsiella pneumoniae subsp. pneumoniae (strain ATCC 700721 / MGH 78578).